A 79-amino-acid chain; its full sequence is U1-plectoxin-Pt1c (79 aa).

The first 18 residues, 1–18 (HLILASALICALVVCTFA), serve as a signal peptide directing secretion. The propeptide occupies 19 to 31 (EEQVNVPFLPDER). Disulfide bonds link cysteine 35-cysteine 49, cysteine 42-cysteine 55, cysteine 48-cysteine 66, cysteine 52-cysteine 75, and cysteine 57-cysteine 64. Residues 78–79 (RR) constitute a propeptide that is removed on maturation.

The protein belongs to the neurotoxin 02 (plectoxin) family. 02 (plectoxin) subfamily. As to expression, expressed by the venom gland.

It is found in the secreted. Functionally, potent toxin that may paralyze and/or kill insect pests such as H.virescens (lepidoptera), S.exigua (beet armyworm) and M.sexta (tobacco hornworm). In Plectreurys tristis (Spider), this protein is U1-plectoxin-Pt1c.